Consider the following 376-residue polypeptide: Deoxyuridine 5'-triphosphate nucleotidohydrolase (376 aa).

Belongs to the dUTPase family. It depends on Mg(2+) as a cofactor.

The catalysed reaction is dUTP + H2O = dUMP + diphosphate + H(+). In terms of biological role, involved in nucleotide metabolism: produces dUMP, the immediate precursor of thymidine nucleotides and decreases the intracellular concentration of dUTP to avoid uracil incorporation into viral DNA. This chain is Deoxyuridine 5'-triphosphate nucleotidohydrolase, found in Homo sapiens (Human).